Reading from the N-terminus, the 148-residue chain is Large ribosomal subunit protein bL9 (148 aa).

The protein belongs to the bacterial ribosomal protein bL9 family.

Functionally, binds to the 23S rRNA. In Aeromonas salmonicida (strain A449), this protein is Large ribosomal subunit protein bL9.